The primary structure comprises 189 residues: Interferon alpha-6 (189 aa).

The N-terminal stretch at 1–20 is a signal peptide; it reads MALPFALLMALVVLSCKSSC. 2 disulfide bridges follow: cysteine 24–cysteine 122 and cysteine 52–cysteine 162.

It belongs to the alpha/beta interferon family.

It localises to the secreted. In terms of biological role, produced by macrophages, IFN-alpha have antiviral activities. Interferon stimulates the production of two enzymes: a protein kinase and an oligoadenylate synthetase. In Homo sapiens (Human), this protein is Interferon alpha-6 (IFNA6).